The sequence spans 231 residues: GFP-like fluorescent chromoprotein FP538 (231 aa).

F65 carries the phenylalanine amide; atypical modification. A cross-link (2-tetrahydro-2-pyridyl-5-imidazolinone (Lys-Gly)) is located at residues 66 to 68; that stretch reads KYG. Residue Y67 is modified to 2,3-didehydrotyrosine.

It belongs to the GFP family. Homotetramer. In terms of processing, contains a chromophore consisting of modified amino acid residues. The chromophore is formed by autocatalytic backbone condensation between Xaa-N and Gly-(N+2), and oxidation of Tyr-(N+1) to didehydrotyrosine. In addition, the residue N lysine undergoes cyclization. The alpha-amino nitrogen is replaced by the epsilon-amino nitrogen, the peptide chain is broken, residue N-1 is released as an amide, and a double bond is formed between the alpha-carbon and the nitrogen so that a tetrahydropyridine ring results. Maturation of the chromophore requires nothing other than molecular oxygen. Tentacle and oral disk.

Its function is as follows. Pigment protein that is yellow in color. The protein is GFP-like fluorescent chromoprotein FP538 of Zoanthus sp. (Green polyp).